We begin with the raw amino-acid sequence, 643 residues long: Threonine--tRNA ligase (643 aa).

The 61-residue stretch at 1 to 61 (MIKITLKDGS…NEDSSLEICT (61 aa)) folds into the TGS domain. A catalytic region spans residues 240–540 (DHNKLGRELG…LIEKYAGALP (301 aa)). Zn(2+) is bound by residues C335, H386, and H517.

It belongs to the class-II aminoacyl-tRNA synthetase family. In terms of assembly, homodimer. It depends on Zn(2+) as a cofactor.

It is found in the cytoplasm. It carries out the reaction tRNA(Thr) + L-threonine + ATP = L-threonyl-tRNA(Thr) + AMP + diphosphate + H(+). Its function is as follows. Catalyzes the attachment of threonine to tRNA(Thr) in a two-step reaction: L-threonine is first activated by ATP to form Thr-AMP and then transferred to the acceptor end of tRNA(Thr). Also edits incorrectly charged L-seryl-tRNA(Thr). In Clostridium perfringens (strain SM101 / Type A), this protein is Threonine--tRNA ligase.